A 317-amino-acid polypeptide reads, in one-letter code: Tenomodulin (317 aa).

Topologically, residues 1-30 (MAKNPPENCEDCHILNAEAFKSKKICKSLK) are cytoplasmic. Residues 31–50 (ICGLVFGILALTLIVLFWGS) form a helical; Signal-anchor for type II membrane protein membrane-spanning segment. Over 51–317 (KHFWPEVPKK…WWVARMLGRV (267 aa)) the chain is Extracellular. Positions 93 to 186 (GNGTDETLEV…ICDNVTMYWI (94 aa)) constitute a BRICHOS domain. Residue N94 is glycosylated (N-linked (GlcNAc...) asparagine). The cysteines at positions 120 and 178 are disulfide-linked. The N-linked (GlcNAc...) asparagine glycan is linked to N180. At S239 the chain carries Phosphoserine.

The protein belongs to the chondromodulin-1 family. As to expression, highly expressed in hypovascular connective tissues such as tendons. Also has strong expression in adipose tissue.

The protein localises to the membrane. It localises to the nucleus envelope. Its subcellular location is the cytoplasm. Its function is as follows. May be an angiogenesis inhibitor. The sequence is that of Tenomodulin (TNMD) from Homo sapiens (Human).